The primary structure comprises 540 residues: NAD(P)H-quinone oxidoreductase subunit 2 B, chloroplastic (540 aa).

The next 13 membrane-spanning stretches (helical) occupy residues 24–44 (LLLFDGSLIFPECILIFGLIL), 57–77 (IPWLYFIPSTSLVMSITALLF), 99–119 (IFQFLILLCSTLCIPLSVEYI), 124–144 (MAITEFLLFVLTATLGGMFLC), 149–169 (FITIFVAPECFSLCSYLLSGY), 183–203 (YLLMGGASSSILVHGFSWLYG), 227–247 (PGISIALIFITVGIGFKLSPA), 325–345 (WHLLLEILAILSMILGNLIAI), 353–373 (MLAYSSIGQIGYVIIGIIVGD), 384–404 (YMLFYISMNLGTFACIVLFGL), 425–445 (ALSLALCLLSLGGLPPLAGFF), 448–468 (LYLFWCGWQAGLYFLVLIGLL), and 514–534 (MIVCVIASTIPGISMNPIIAI).

Belongs to the complex I subunit 2 family. In terms of assembly, NDH is composed of at least 16 different subunits, 5 of which are encoded in the nucleus.

It is found in the plastid. Its subcellular location is the chloroplast thylakoid membrane. The enzyme catalyses a plastoquinone + NADH + (n+1) H(+)(in) = a plastoquinol + NAD(+) + n H(+)(out). It catalyses the reaction a plastoquinone + NADPH + (n+1) H(+)(in) = a plastoquinol + NADP(+) + n H(+)(out). Functionally, NDH shuttles electrons from NAD(P)H:plastoquinone, via FMN and iron-sulfur (Fe-S) centers, to quinones in the photosynthetic chain and possibly in a chloroplast respiratory chain. The immediate electron acceptor for the enzyme in this species is believed to be plastoquinone. Couples the redox reaction to proton translocation, and thus conserves the redox energy in a proton gradient. This chain is NAD(P)H-quinone oxidoreductase subunit 2 B, chloroplastic, found in Coffea arabica (Arabian coffee).